The following is a 430-amino-acid chain: Putative ABC transporter periplasmic-binding protein YcjN (430 aa).

The first 19 residues, 1-19, serve as a signal peptide directing secretion; it reads MIKSKIVLLSALVSCALIS.

This sequence belongs to the bacterial solute-binding protein 1 family.

The protein localises to the periplasm. Probably part of the binding-protein-dependent transport system YcjNOP. The sequence is that of Putative ABC transporter periplasmic-binding protein YcjN (ycjN) from Escherichia coli (strain K12).